The following is a 266-amino-acid chain: Putative carbamate hydrolase RutD (266 aa).

Residues P14–L115 form the AB hydrolase-1 domain.

This sequence belongs to the AB hydrolase superfamily. Hydrolase RutD family.

The catalysed reaction is carbamate + 2 H(+) = NH4(+) + CO2. In terms of biological role, involved in pyrimidine catabolism. May facilitate the hydrolysis of carbamate, a reaction that can also occur spontaneously. The polypeptide is Putative carbamate hydrolase RutD (Shigella sonnei (strain Ss046)).